The chain runs to 275 residues: 4-diphosphocytidyl-2-C-methyl-D-erythritol kinase (275 aa).

Lys-8 is a catalytic residue. 86-96 (PEGAGLGGGSS) lines the ATP pocket. Residue Asp-125 is part of the active site.

This sequence belongs to the GHMP kinase family. IspE subfamily.

The enzyme catalyses 4-CDP-2-C-methyl-D-erythritol + ATP = 4-CDP-2-C-methyl-D-erythritol 2-phosphate + ADP + H(+). Its pathway is isoprenoid biosynthesis; isopentenyl diphosphate biosynthesis via DXP pathway; isopentenyl diphosphate from 1-deoxy-D-xylulose 5-phosphate: step 3/6. Catalyzes the phosphorylation of the position 2 hydroxy group of 4-diphosphocytidyl-2C-methyl-D-erythritol. The chain is 4-diphosphocytidyl-2-C-methyl-D-erythritol kinase from Thermus thermophilus (strain ATCC BAA-163 / DSM 7039 / HB27).